The chain runs to 108 residues: Trp operon repressor homolog (108 aa).

A DNA-binding region spans residues 59-82; sequence QRQISQLLGVGVATITRGSNELKS.

The protein belongs to the TrpR family. Homodimer.

It is found in the cytoplasm. This protein is an aporepressor. When complexed with L-tryptophan it binds the operator region of the trp operon and prevents the initiation of transcription. The chain is Trp operon repressor homolog from Aliivibrio fischeri (strain MJ11) (Vibrio fischeri).